Here is a 479-residue protein sequence, read N- to C-terminus: Serine protease HTRA1A (479 aa).

The N-terminal stretch at 1–18 (MILVTLFCICALVTSLQA) is a signal peptide. The IGFBP N-terminal domain occupies 27–111 (VIGGCPSHCD…RGKQGVCVCK (85 aa)). Cystine bridges form between C31–C56, C35–C58, C40–C59, C47–C62, C70–C87, and C81–C108. The 60-residue stretch at 96–155 (SATVRRRGKQGVCVCKSSDPVCGSDGVSYRDICELKRVSNRAQSLQQPPVLFIQRGACGT) folds into the Kazal-like domain. The tract at residues 203–363 (GSGFVVSDDG…IPSDKIRQFL (161 aa)) is serine protease. Active-site charge relay system residues include H219, D249, and S327. The region spanning 364-466 (AESYDRLARG…LRVVVRRGNE (103 aa)) is the PDZ domain.

This sequence belongs to the peptidase S1C family. Forms homotrimers. In the presence of substrate, may form higher-order multimers in a PDZ-independent manner.

The protein resides in the secreted. Its subcellular location is the cytoplasm. It is found in the cytosol. Functionally, serine protease with a variety of targets, including extracellular matrix proteins and proteoglycans. Through cleavage of proteoglycans, may release soluble FGF-glycosaminoglycan complexes that promote the range and intensity of FGF signals in the extracellular space. Regulates the availability of insulin-like growth factors (IGFs) by cleaving IGF-binding proteins. Inhibits signaling mediated by TGF-beta family members. Consequently, may regulate many physiological processes. Intracellularly, degrades TSC2, leading to the activation of TSC2 downstream targets. The protein is Serine protease HTRA1A (htra1a) of Danio rerio (Zebrafish).